Here is a 29-residue protein sequence, read N- to C-terminus: RICPRILMECSSDSDCLAECICLENGFCG.

Cystine bridges form between Cys3/Cys20, Cys10/Cys22, and Cys16/Cys28.

This sequence belongs to the protease inhibitor I7 (squash-type serine protease inhibitor) family.

The protein resides in the secreted. In terms of biological role, inhibits trypsin. The polypeptide is Trypsin inhibitor 3 (Luffa aegyptiaca (Sponge gourd)).